The primary structure comprises 1253 residues: Cytoplasmic FMR1-interacting protein 1 homolog (1253 aa).

The protein belongs to the CYFIP family.

It localises to the cytoplasm. The protein resides in the perinuclear region. Its subcellular location is the cell projection. It is found in the lamellipodium. The protein localises to the ruffle. It localises to the synapse. The protein resides in the synaptosome. Its function is as follows. Involved in formation of membrane ruffles and lamellipodia protrusions and in axon outgrowth. Binds to F-actin but not to RNA. The sequence is that of Cytoplasmic FMR1-interacting protein 1 homolog from Danio rerio (Zebrafish).